The chain runs to 338 residues: CRISPR system Cmr subunit Cmr1-1 (338 aa).

Belongs to the CRISPR system Cmr1 family. As to quaternary structure, part of the type III-B Cmr ribonucleoprotein (RNP) complex, an elongated RNP with Cmr2 and Cmr3 as the base, with Cmr4 and Cmr5 forming a helical core along the mature crRNA (39 or 45 nt in length), while the complex is capped by Cmr6 and Cmr1. The 5' end of the crRNA is bound to Cmr2 and Cmr3, while Cmr6 and a Cmr1 subunit (Cmr1-1 or Cmr1-2) cap the 3' end of the crRNA. The target RNA lies antiparallel to the crRNA, with its 5' end near Cmr1 and Cmr6 and its 3' end near Cmr2 and Cmr3; major target cleavage occurs nears the junction of Cmr1/Cmr6 and Cmr4/Cmr, with minor cleavage occurring at 6 nt intervals which coincide with the proposed spacing of Cmr4 subunits.

The protein localises to the cytoplasm. CRISPR (clustered regularly interspaced short palindromic repeat), is an adaptive immune system that provides protection against mobile genetic elements (viruses, transposable elements and conjugative plasmids). CRISPR clusters contain sequences complementary to antecedent mobile elements and target invading nucleic acids. CRISPR clusters are transcribed and processed into CRISPR RNA (crRNA), formerly called psiRNA (prokaryotic silencing) in this organism. Part of the Cmr ribonucleoprotein complex which has divalent cation-dependent endoribonuclease activity specific for ssRNA complementary to the crRNA (target RNA), generating 5' hydroxy- and 3' phosphate or 2'-3' cyclic phosphate termini. Cmr4 is probably the subunit that cleaves target RNA. Cmr complex does not cleave ssDNA complementary to the crRNA. Cleavage of invading RNA is guided by the crRNA; substrate cleavage occurs a fixed distance (14 nt) from the 3' end of the crRNA. In vitro reconstitution shows Cmr1-2 and Cmr5 are not absolutely necessary for target cleavage. This Pyrococcus furiosus (strain ATCC 43587 / DSM 3638 / JCM 8422 / Vc1) protein is CRISPR system Cmr subunit Cmr1-1.